We begin with the raw amino-acid sequence, 213 residues long: Uridine kinase (213 aa).

Residue 15–22 (GASASGKS) coordinates ATP.

This sequence belongs to the uridine kinase family.

Its subcellular location is the cytoplasm. It carries out the reaction uridine + ATP = UMP + ADP + H(+). The enzyme catalyses cytidine + ATP = CMP + ADP + H(+). Its pathway is pyrimidine metabolism; CTP biosynthesis via salvage pathway; CTP from cytidine: step 1/3. The protein operates within pyrimidine metabolism; UMP biosynthesis via salvage pathway; UMP from uridine: step 1/1. This Yersinia enterocolitica serotype O:8 / biotype 1B (strain NCTC 13174 / 8081) protein is Uridine kinase.